Reading from the N-terminus, the 379-residue chain is MKEQCVAMLLAGGKGSRLNALTKNLAKPAVPFGGKYRIIDFALSNCANSGIHHVGVLTQYQPLLLNSYIGIGEPWDLDRNDGGVSILSPYAEASEVKWYKGTASAIYENRHFLKELQPEHVLILSGDHIYKMDYGKMLEYHAEKQADATIAVIEVSWAEAGRFGILHTNDKMEITSFEEKPKYPKSNLASMGVYVFKWSVLEDALERDEKNSASSHDFGKDVIPALLEENKRLNAYPFKGYWKDVGTVRSLWEANMDLLGDHPPLDLFERNWRIYSVSPNLPPQFVADLAEIKESLVSEGCTVYGSVTRSVIFQRVAIGRHSAIKRSVVMHDVSIGEYVEIENAIVSAGIRIPDGFCAKPEDGEVLLITEEYVKKHKVV.

Alpha-D-glucose 1-phosphate is bound by residues Tyr-99, Gly-164, 179–180 (EK), and Ser-190.

The protein belongs to the bacterial/plant glucose-1-phosphate adenylyltransferase family. Homotetramer.

The enzyme catalyses alpha-D-glucose 1-phosphate + ATP + H(+) = ADP-alpha-D-glucose + diphosphate. Its pathway is glycan biosynthesis; glycogen biosynthesis. Involved in the biosynthesis of ADP-glucose, a building block required for the elongation reactions to produce glycogen. Catalyzes the reaction between ATP and alpha-D-glucose 1-phosphate (G1P) to produce pyrophosphate and ADP-Glc. The polypeptide is Glucose-1-phosphate adenylyltransferase (Bacillus licheniformis (strain ATCC 14580 / DSM 13 / JCM 2505 / CCUG 7422 / NBRC 12200 / NCIMB 9375 / NCTC 10341 / NRRL NRS-1264 / Gibson 46)).